The chain runs to 502 residues: Peroxisomal catalase (502 aa).

Catalysis depends on residues His64 and Asn137. Tyr347 is a binding site for heme. A Microbody targeting signal motif is present at residues 500–502 (AKM).

This sequence belongs to the catalase family. It depends on heme as a cofactor.

The protein localises to the peroxisome matrix. It carries out the reaction 2 H2O2 = O2 + 2 H2O. Its function is as follows. Catalyzes the degradation of hydrogen peroxide (H(2)O(2)) generated by peroxisomal oxidases to water and oxygen, thereby protecting cells from the toxic effects of hydrogen peroxide. The chain is Peroxisomal catalase from Toxoplasma gondii.